Reading from the N-terminus, the 179-residue chain is Large ribosomal subunit protein uL5c (179 aa).

This sequence belongs to the universal ribosomal protein uL5 family. In terms of assembly, part of the 50S ribosomal subunit; contacts the 5S rRNA.

It is found in the plastid. The protein resides in the chloroplast. Functionally, binds 5S rRNA, forms part of the central protuberance of the 50S subunit. This Gracilaria tenuistipitata var. liui (Red alga) protein is Large ribosomal subunit protein uL5c (rpl5).